The primary structure comprises 86 residues: Small ribosomal subunit protein bS20 (86 aa).

Belongs to the bacterial ribosomal protein bS20 family.

Functionally, binds directly to 16S ribosomal RNA. This chain is Small ribosomal subunit protein bS20, found in Exiguobacterium sibiricum (strain DSM 17290 / CCUG 55495 / CIP 109462 / JCM 13490 / 255-15).